The sequence spans 340 residues: Farnesyl pyrophosphate synthase 1 (340 aa).

The isopentenyl diphosphate site is built by Lys-47, Arg-50, and Gln-85. Mg(2+)-binding residues include Asp-92 and Asp-96. Arg-101 serves as a coordination point for dimethylallyl diphosphate. Arg-102 is an isopentenyl diphosphate binding site. Positions 188, 189, 227, 244, and 253 each coordinate dimethylallyl diphosphate.

This sequence belongs to the FPP/GGPP synthase family. Mg(2+) is required as a cofactor. As to expression, mainly expressed in trichomes and flowers, and, to a lower extent, in leaves, roots and stems.

Its subcellular location is the cytoplasm. It localises to the nucleus. It carries out the reaction isopentenyl diphosphate + dimethylallyl diphosphate = (2E)-geranyl diphosphate + diphosphate. The catalysed reaction is isopentenyl diphosphate + (2E)-geranyl diphosphate = (2E,6E)-farnesyl diphosphate + diphosphate. It functions in the pathway isoprenoid biosynthesis; farnesyl diphosphate biosynthesis; farnesyl diphosphate from geranyl diphosphate and isopentenyl diphosphate: step 1/1. Its pathway is sesquiterpene biosynthesis. It participates in isoprenoid biosynthesis; geranyl diphosphate biosynthesis; geranyl diphosphate from dimethylallyl diphosphate and isopentenyl diphosphate: step 1/1. Catalyzes the sequential condensation of isopentenyl pyrophosphate with the allylic pyrophosphates, dimethylallyl pyrophosphate, and then with the resultant geranylpyrophosphate to the ultimate product farnesyl pyrophosphate. The protein is Farnesyl pyrophosphate synthase 1 of Cannabis sativa (Hemp).